The primary structure comprises 71 residues: Long neurotoxin 1 (71 aa).

5 disulfides stabilise this stretch: Cys-3–Cys-20, Cys-14–Cys-41, Cys-26–Cys-30, Cys-45–Cys-56, and Cys-57–Cys-62.

Belongs to the three-finger toxin family. Long-chain subfamily. Type II alpha-neurotoxin sub-subfamily. Expressed by the venom gland.

The protein localises to the secreted. Binds with high affinity to muscular (alpha-1/CHRNA1) and neuronal (alpha-7/CHRNA7) nicotinic acetylcholine receptor (nAChR) and inhibits acetylcholine from binding to the receptor, thereby impairing neuromuscular and neuronal transmission. The protein is Long neurotoxin 1 of Naja nivea (Cape cobra).